The chain runs to 149 residues: Ribonuclease H (149 aa).

Residues 4-145 (QRGVVEAFTD…ADALANQGID (142 aa)) form the RNase H type-1 domain. Mg(2+) is bound by residues aspartate 13, glutamate 51, aspartate 73, and aspartate 137.

The protein belongs to the RNase H family. As to quaternary structure, monomer. The cofactor is Mg(2+).

The protein localises to the cytoplasm. It catalyses the reaction Endonucleolytic cleavage to 5'-phosphomonoester.. In terms of biological role, endonuclease that specifically degrades the RNA of RNA-DNA hybrids. This chain is Ribonuclease H, found in Halorhodospira halophila (strain DSM 244 / SL1) (Ectothiorhodospira halophila (strain DSM 244 / SL1)).